Consider the following 472-residue polypeptide: Doublesex- and mab-3-related transcription factor 3 (472 aa).

The DM DNA-binding region spans 29–76; sequence CARCRNHGVLSWLKGHKRYCRFKDCTCEKCILIIERQRVMAAQVALRR. 2 disordered regions span residues 89–128 and 155–191; these read DSLRALPGPPPPGDAVAAPQPPPASQPSQPQPPRPAAELA and EERLGDGKSADNTEVFSDKDTDQRSSPDVAKSKGCFT. The span at 95–123 shows a compositional bias: pro residues; it reads PGPPPPGDAVAAPQPPPASQPSQPQPPRP. The segment covering 155 to 179 has biased composition (basic and acidic residues); it reads EERLGDGKSADNTEVFSDKDTDQRS. One can recognise a DMA domain in the interval 249-284; it reads RPPLEVLKKIFPNQKPTVLELILKGCGGDLVSAVEV. The disordered stretch occupies residues 430-472; that stretch reads TEDPRISIPDDGCPFVSKQSIYTEDDYDERSDSSDSRTLNTSS.

This sequence belongs to the DMRT family. As to quaternary structure, may homodimerize. In terms of tissue distribution, expressed in testis.

The protein localises to the nucleus. In terms of biological role, probable transcription factor that plays a role in configuring the spinal circuits controlling stride in vertebrates. Involved in neuronal specification within specific subdivision of spinal cord neurons and in the development of a coordinated locomotor network controlling limb movements. May regulate transcription during sexual development. This chain is Doublesex- and mab-3-related transcription factor 3 (DMRT3), found in Homo sapiens (Human).